A 140-amino-acid chain; its full sequence is Nucleoside diphosphate kinase (140 aa).

6 residues coordinate ATP: K11, F59, R87, T93, R104, and N114. Residue H117 is the Pros-phosphohistidine intermediate of the active site.

It belongs to the NDK family. Homotetramer. Mg(2+) serves as cofactor.

The protein localises to the cytoplasm. It catalyses the reaction a 2'-deoxyribonucleoside 5'-diphosphate + ATP = a 2'-deoxyribonucleoside 5'-triphosphate + ADP. The catalysed reaction is a ribonucleoside 5'-diphosphate + ATP = a ribonucleoside 5'-triphosphate + ADP. In terms of biological role, major role in the synthesis of nucleoside triphosphates other than ATP. The ATP gamma phosphate is transferred to the NDP beta phosphate via a ping-pong mechanism, using a phosphorylated active-site intermediate. The chain is Nucleoside diphosphate kinase from Maricaulis maris (strain MCS10) (Caulobacter maris).